Consider the following 406-residue polypeptide: Phosphopentomutase (406 aa).

Mn(2+) is bound by residues Asp-10, Asp-305, His-310, Asp-346, His-347, and His-358.

This sequence belongs to the phosphopentomutase family. Mn(2+) is required as a cofactor.

It is found in the cytoplasm. It carries out the reaction 2-deoxy-alpha-D-ribose 1-phosphate = 2-deoxy-D-ribose 5-phosphate. It catalyses the reaction alpha-D-ribose 1-phosphate = D-ribose 5-phosphate. It functions in the pathway carbohydrate degradation; 2-deoxy-D-ribose 1-phosphate degradation; D-glyceraldehyde 3-phosphate and acetaldehyde from 2-deoxy-alpha-D-ribose 1-phosphate: step 1/2. Functionally, isomerase that catalyzes the conversion of deoxy-ribose 1-phosphate (dRib-1-P) and ribose 1-phosphate (Rib-1-P) to deoxy-ribose 5-phosphate (dRib-5-P) and ribose 5-phosphate (Rib-5-P), respectively. The chain is Phosphopentomutase from Agrobacterium fabrum (strain C58 / ATCC 33970) (Agrobacterium tumefaciens (strain C58)).